A 183-amino-acid polypeptide reads, in one-letter code: BLOC-1-related complex subunit 8 homolog (183 aa).

The segment at 152-183 (MIGPGTATGRTEAQAATSSNPGELQRSYTTLH) is disordered. Residues 159 to 183 (TGRTEAQAATSSNPGELQRSYTTLH) are compositionally biased toward polar residues.

Belongs to the BORCS8 family.

The protein localises to the lysosome membrane. May participate in the coupling of lysosomes to microtubule plus-end-directed kinesin motor. The sequence is that of BLOC-1-related complex subunit 8 homolog from Drosophila melanogaster (Fruit fly).